The chain runs to 160 residues: MNIWVDADACPAEVKDILWRAAQRWQVPVTLVANQLLRVPASPWMRAVQVPRGFDVADAHIVASAVPGDLVITADIPLAAEVVGKGVAAMSWRGEVFDAGSIGERLTMRDMMEELRAGGVDIGGPAAFGQADRRAFANALDAAMQRRARTRGAGGKPGVV.

The protein belongs to the UPF0178 family.

The chain is UPF0178 protein BB1267 from Bordetella bronchiseptica (strain ATCC BAA-588 / NCTC 13252 / RB50) (Alcaligenes bronchisepticus).